The chain runs to 346 residues: tRNA N6-adenosine threonylcarbamoyltransferase (346 aa).

Fe cation is bound by residues H117 and H121. Residues 139–143 (VVSGG), D172, G185, D189, and N278 each bind substrate. D307 is a Fe cation binding site.

The protein belongs to the KAE1 / TsaD family. As to quaternary structure, may form a heterodimer with TsaB. Fe(2+) serves as cofactor.

Its subcellular location is the cytoplasm. It catalyses the reaction L-threonylcarbamoyladenylate + adenosine(37) in tRNA = N(6)-L-threonylcarbamoyladenosine(37) in tRNA + AMP + H(+). Functionally, required for the formation of a threonylcarbamoyl group on adenosine at position 37 (t(6)A37) in tRNAs that read codons beginning with adenine. Is involved in the transfer of the threonylcarbamoyl moiety of threonylcarbamoyl-AMP (TC-AMP) to the N6 group of A37, together with TsaE and TsaB; this reaction does not require ATP in vitro. TsaD likely plays a direct catalytic role in this reaction. This is tRNA N6-adenosine threonylcarbamoyltransferase from Bacillus subtilis (strain 168).